A 763-amino-acid chain; its full sequence is DNA polymerase 3 (763 aa).

This sequence belongs to the DNA polymerase type-B family.

It carries out the reaction DNA(n) + a 2'-deoxyribonucleoside 5'-triphosphate = DNA(n+1) + diphosphate. This is DNA polymerase 3 (dpo3) from Saccharolobus shibatae (strain ATCC 51178 / DSM 5389 / JCM 8931 / NBRC 15437 / B12) (Sulfolobus shibatae).